We begin with the raw amino-acid sequence, 85 residues long: Small ribosomal subunit protein uS17 (85 aa).

Belongs to the universal ribosomal protein uS17 family. Part of the 30S ribosomal subunit.

One of the primary rRNA binding proteins, it binds specifically to the 5'-end of 16S ribosomal RNA. This Acetivibrio thermocellus (strain ATCC 27405 / DSM 1237 / JCM 9322 / NBRC 103400 / NCIMB 10682 / NRRL B-4536 / VPI 7372) (Clostridium thermocellum) protein is Small ribosomal subunit protein uS17.